The sequence spans 93 residues: Small ribosomal subunit protein uS19c (93 aa).

Belongs to the universal ribosomal protein uS19 family.

The protein resides in the plastid. It localises to the chloroplast. Functionally, protein S19 forms a complex with S13 that binds strongly to the 16S ribosomal RNA. The sequence is that of Small ribosomal subunit protein uS19c from Oryza nivara (Indian wild rice).